We begin with the raw amino-acid sequence, 419 residues long: Serine hydroxymethyltransferase (419 aa).

Residues Leu-120 and 124–126 (GHL) each bind (6S)-5,6,7,8-tetrahydrofolate. Lys-229 is modified (N6-(pyridoxal phosphate)lysine).

Belongs to the SHMT family. As to quaternary structure, homodimer. The cofactor is pyridoxal 5'-phosphate.

The protein resides in the cytoplasm. The catalysed reaction is (6R)-5,10-methylene-5,6,7,8-tetrahydrofolate + glycine + H2O = (6S)-5,6,7,8-tetrahydrofolate + L-serine. It participates in one-carbon metabolism; tetrahydrofolate interconversion. Its pathway is amino-acid biosynthesis; glycine biosynthesis; glycine from L-serine: step 1/1. Its function is as follows. Catalyzes the reversible interconversion of serine and glycine with tetrahydrofolate (THF) serving as the one-carbon carrier. This reaction serves as the major source of one-carbon groups required for the biosynthesis of purines, thymidylate, methionine, and other important biomolecules. Also exhibits THF-independent aldolase activity toward beta-hydroxyamino acids, producing glycine and aldehydes, via a retro-aldol mechanism. The polypeptide is Serine hydroxymethyltransferase (Herpetosiphon aurantiacus (strain ATCC 23779 / DSM 785 / 114-95)).